The sequence spans 340 residues: Protein RecA (340 aa).

65-72 (GPESGGKT) is an ATP binding site.

This sequence belongs to the RecA family.

The protein resides in the cytoplasm. Functionally, can catalyze the hydrolysis of ATP in the presence of single-stranded DNA, the ATP-dependent uptake of single-stranded DNA by duplex DNA, and the ATP-dependent hybridization of homologous single-stranded DNAs. It interacts with LexA causing its activation and leading to its autocatalytic cleavage. This chain is Protein RecA, found in Thermus thermophilus (strain ATCC BAA-163 / DSM 7039 / HB27).